A 475-amino-acid polypeptide reads, in one-letter code: UDP-N-acetylmuramate--L-alanine ligase (475 aa).

An ATP-binding site is contributed by 119–125 (GTHGKTT).

Belongs to the MurCDEF family.

The protein localises to the cytoplasm. The enzyme catalyses UDP-N-acetyl-alpha-D-muramate + L-alanine + ATP = UDP-N-acetyl-alpha-D-muramoyl-L-alanine + ADP + phosphate + H(+). The protein operates within cell wall biogenesis; peptidoglycan biosynthesis. Functionally, cell wall formation. In Wigglesworthia glossinidia brevipalpis, this protein is UDP-N-acetylmuramate--L-alanine ligase.